The following is a 570-amino-acid chain: Glutamate--tRNA ligase, chloroplastic/mitochondrial (570 aa).

Residues 1–39 (MASLVYGTPWLRVRSLPELAPAFLRRRQSSLFYCSRRSF) constitute a chloroplast and mitochondrion transit peptide. 57-59 (RFA) contacts L-glutamate. A 'HIGH' region motif is present at residues 60–70 (PSPTGNLHVGG). H67 is a binding site for ATP. Residues E93, 245 to 249 (YNFCV), and R263 contribute to the L-glutamate site. Residues E266 and 301–305 (KLSKR) contribute to the ATP site. Residues 301–305 (KLSKR) carry the 'KMSKS' region motif.

Belongs to the class-I aminoacyl-tRNA synthetase family. Glutamate--tRNA ligase type 1 subfamily.

It localises to the plastid. It is found in the chloroplast. The protein resides in the mitochondrion. It catalyses the reaction tRNA(Glu) + L-glutamate + ATP = L-glutamyl-tRNA(Glu) + AMP + diphosphate. Its function is as follows. Catalyzes the attachment of glutamate to tRNA(Glu) in a two-step reaction: glutamate is first activated by ATP to form Glu-AMP and then transferred to the acceptor end of tRNA(Glu). The polypeptide is Glutamate--tRNA ligase, chloroplastic/mitochondrial (Arabidopsis thaliana (Mouse-ear cress)).